We begin with the raw amino-acid sequence, 772 residues long: Carnitine O-palmitoyltransferase 1, muscle isoform (772 aa).

Residues 1–47 are Cytoplasmic-facing; that stretch reads MAEAHQAVAFQFTVTPDGVDFRLSREALKHVYLSGINSWKKRLIRIK. The chain crosses the membrane as a helical span at residues 48–73; that stretch reads NGILRGVYPGSPTSWLVVIMATVGSS. The Mitochondrial intermembrane portion of the chain corresponds to 74–102; that stretch reads FCNVDISLGLVSCIQRCLPQGCGPYQTPQ. The chain crosses the membrane as a helical span at residues 103 to 122; the sequence is TRALLSMAIFSTGVWVTGIF. Over 123–772 the chain is Cytoplasmic; the sequence is FFRQTLKLLL…DLFQVPKAYS (650 aa). H473 (proton acceptor) is an active-site residue. 555 to 567 lines the CoA pocket; it reads GKGLIKKCRTSPD. (R)-carnitine is bound by residues Y589 and T602.

The protein belongs to the carnitine/choline acetyltransferase family. In terms of tissue distribution, strong expression in heart and skeletal muscle. No expression in liver and kidney.

The protein resides in the mitochondrion outer membrane. It catalyses the reaction (R)-carnitine + hexadecanoyl-CoA = O-hexadecanoyl-(R)-carnitine + CoA. Its pathway is lipid metabolism; fatty acid beta-oxidation. Catalyzes the transfer of the acyl group of long-chain fatty acid-CoA conjugates onto carnitine, an essential step for the mitochondrial uptake of long-chain fatty acids and their subsequent beta-oxidation in the mitochondrion. This chain is Carnitine O-palmitoyltransferase 1, muscle isoform (CPT1B), found in Homo sapiens (Human).